Consider the following 257-residue polypeptide: Flavin-dependent thymidylate synthase (257 aa).

Residues 1–202 (MNVKLVSYTR…PRLFRYVGPN (202 aa)) form the ThyX domain. FAD contacts are provided by residues Ser55, 79–81 (RHR), and Gln87. DUMP-binding positions include 76–79 (QLVR), 87–91 (QMSHR), and Arg141. The short motif at 79–89 (RHRVASYTQMS) is the ThyX motif element. FAD-binding positions include 157–159 (NAR) and Asn163. Arg168 is a dUMP binding site. Arg168 (involved in ionization of N3 of dUMP, leading to its activation) is an active-site residue.

The protein belongs to the thymidylate synthase ThyX family. In terms of assembly, homotetramer. Requires FAD as cofactor.

It catalyses the reaction dUMP + (6R)-5,10-methylene-5,6,7,8-tetrahydrofolate + NADPH + H(+) = dTMP + (6S)-5,6,7,8-tetrahydrofolate + NADP(+). Its pathway is pyrimidine metabolism; dTTP biosynthesis. Catalyzes the reductive methylation of 2'-deoxyuridine-5'-monophosphate (dUMP) to 2'-deoxythymidine-5'-monophosphate (dTMP) while utilizing 5,10-methylenetetrahydrofolate (mTHF) as the methyl donor, and NADPH and FADH(2) as the reductant. This is Flavin-dependent thymidylate synthase from Sulfurisphaera tokodaii (strain DSM 16993 / JCM 10545 / NBRC 100140 / 7) (Sulfolobus tokodaii).